The sequence spans 197 residues: Peptidyl-tRNA hydrolase (197 aa).

Y23 contributes to the tRNA binding site. H28 acts as the Proton acceptor in catalysis. F73, N75, and N121 together coordinate tRNA.

It belongs to the PTH family. In terms of assembly, monomer.

The protein localises to the cytoplasm. The catalysed reaction is an N-acyl-L-alpha-aminoacyl-tRNA + H2O = an N-acyl-L-amino acid + a tRNA + H(+). In terms of biological role, hydrolyzes ribosome-free peptidyl-tRNAs (with 1 or more amino acids incorporated), which drop off the ribosome during protein synthesis, or as a result of ribosome stalling. Its function is as follows. Catalyzes the release of premature peptidyl moieties from peptidyl-tRNA molecules trapped in stalled 50S ribosomal subunits, and thus maintains levels of free tRNAs and 50S ribosomes. This chain is Peptidyl-tRNA hydrolase, found in Frankia casuarinae (strain DSM 45818 / CECT 9043 / HFP020203 / CcI3).